We begin with the raw amino-acid sequence, 81 residues long: Large ribosomal subunit protein eL31 (81 aa).

It belongs to the eukaryotic ribosomal protein eL31 family.

The chain is Large ribosomal subunit protein eL31 (rpl31e) from Methanothermobacter thermautotrophicus (strain ATCC 29096 / DSM 1053 / JCM 10044 / NBRC 100330 / Delta H) (Methanobacterium thermoautotrophicum).